A 387-amino-acid polypeptide reads, in one-letter code: Alanine racemase (387 aa).

The Proton acceptor; specific for D-alanine role is filled by Lys-38. At Lys-38 the chain carries N6-(pyridoxal phosphate)lysine. Substrate is bound at residue Arg-136. The Proton acceptor; specific for L-alanine role is filled by Tyr-267. Met-315 provides a ligand contact to substrate.

It belongs to the alanine racemase family. Pyridoxal 5'-phosphate serves as cofactor.

It carries out the reaction L-alanine = D-alanine. Its pathway is amino-acid biosynthesis; D-alanine biosynthesis; D-alanine from L-alanine: step 1/1. Functionally, catalyzes the interconversion of L-alanine and D-alanine. May also act on other amino acids. In Clostridium novyi (strain NT), this protein is Alanine racemase (alr).